Here is a 209-residue protein sequence, read N- to C-terminus: MALTQMALDSLDFDATVALAEKVAPHVDILEIGTPCIKHNGIKLLETLRAKFPNNKILVDLKTMDAGFYEAEPFYKAGADITTVLGVADLGTIKGVIDAANKYGKKAQIDLINVGDKAARTKEVAKLGAHIIGVHTGLDQQAAGQTPFADLATVTGLNLGLEVSVAGGVKPATVAQVKDAGATIIVAGAAIYGAADPAAAAAEITGLAK.

The protein belongs to the HPS/KGPDC family. HPS subfamily. As to quaternary structure, homodimer.

It catalyses the reaction D-ribulose 5-phosphate + formaldehyde = D-arabino-hex-3-ulose 6-phosphate. It participates in one-carbon metabolism; formaldehyde assimilation via RuMP pathway; D-fructose 6-phosphate from D-ribulose 5-phosphate and formaldehyde: step 1/2. Functionally, catalyzes the condensation of ribulose 5-phosphate with formaldehyde to form 3-hexulose 6-phosphate. This Methylomonas aminofaciens protein is 3-hexulose-6-phosphate synthase (rmpA).